Reading from the N-terminus, the 275-residue chain is Probable ribosomal RNA small subunit methyltransferase A (275 aa).

Positions 13, 38, 59, 84, and 101 each coordinate S-adenosyl-L-methionine.

This sequence belongs to the class I-like SAM-binding methyltransferase superfamily. rRNA adenine N(6)-methyltransferase family. RsmA subfamily.

The protein resides in the cytoplasm. In terms of biological role, specifically dimethylates two adjacent adenosines in the loop of a conserved hairpin near the 3'-end of 16S rRNA in the 30S particle. May play a critical role in biogenesis of 30S subunits. This is Probable ribosomal RNA small subunit methyltransferase A from Methanocaldococcus jannaschii (strain ATCC 43067 / DSM 2661 / JAL-1 / JCM 10045 / NBRC 100440) (Methanococcus jannaschii).